Here is a 312-residue protein sequence, read N- to C-terminus: DDRGK domain-containing protein 1 (312 aa).

Topologically, residues 1 to 2 (ME) are lumenal. Residues 3 to 23 (LIILVGIAIALLVVIITLYLL) form a helical membrane-spanning segment. The Cytoplasmic portion of the chain corresponds to 24–312 (QKKNAAPETK…ISAGGEEASS (289 aa)). A disordered region spans residues 30–163 (PETKPAAAPQ…KQQEDLEAEV (134 aa)). A compositionally biased stretch (low complexity) spans 52–85 (RRAQIARNQRNRLRQNAPAAPAGQVAPAAGAPAA). A compositionally biased stretch (acidic residues) spans 90–99 (DHEDEGQVDA). The segment covering 110–163 (LDEKMGAKKRAKMEAKEQKRLQREQELHDREQRKVKEAKEEAERKQQEDLEAEV) has biased composition (basic and acidic residues).

The protein belongs to the DDRGK1 family. As to quaternary structure, interacts with Atg9; the interaction is transient.

The protein localises to the endoplasmic reticulum membrane. Its function is as follows. Substrate adapter for ufmylation, the covalent attachment of the ubiquitin-like modifier UFM1 to substrate proteins. Required for ufmylation of Atg9; protects the nervous system during aging, possibly by stabilizing Atg9 and supporting its function. In Drosophila erecta (Fruit fly), this protein is DDRGK domain-containing protein 1.